The chain runs to 203 residues: Amelogenin, Y isoform (203 aa).

Positions 1–16 are cleaved as a signal peptide; the sequence is MGTWILFACLVGAAFA. The segment at 116 to 180 is disordered; it reads MPVPGQQSMT…PPLPPMFPMR (65 aa). The span at 120-130 shows a compositional bias: polar residues; the sequence is GQQSMTPTQHH. A compositionally biased stretch (low complexity) spans 131–142; sequence QPNLPLPAQQPF. The span at 143–180 shows a compositional bias: pro residues; that stretch reads QPQPVQPLPHQPMQPQPPVQPMQPLLPQPPLPPMFPMR.

Belongs to the amelogenin family.

It localises to the secreted. The protein resides in the extracellular space. It is found in the extracellular matrix. Functionally, plays a role in biomineralization. Seems to regulate the formation of crystallites during the secretory stage of tooth enamel development. Thought to play a major role in the structural organization and mineralization of developing enamel. The polypeptide is Amelogenin, Y isoform (AMELY) (Pan troglodytes (Chimpanzee)).